Consider the following 319-residue polypeptide: ATP-dependent 6-phosphofructokinase (319 aa).

ATP is bound at residue G11. ADP is bound at residue 21–25 (RAVVR). ATP-binding positions include 72–73 (RS) and 102–105 (GDGS). A Mg(2+)-binding site is contributed by D103. 125 to 127 (TID) is a substrate binding site. D127 serves as the catalytic Proton acceptor. An ADP-binding site is contributed by R154. Substrate contacts are provided by residues R162 and 169-171 (MGR). Residues 185–187 (GAE), R211, and 213–215 (KKH) each bind ADP. Substrate is bound by residues E222, R243, and 249-252 (HVQR).

It belongs to the phosphofructokinase type A (PFKA) family. ATP-dependent PFK group I subfamily. Prokaryotic clade 'B1' sub-subfamily. As to quaternary structure, homotetramer. Requires Mg(2+) as cofactor.

Its subcellular location is the cytoplasm. The enzyme catalyses beta-D-fructose 6-phosphate + ATP = beta-D-fructose 1,6-bisphosphate + ADP + H(+). The protein operates within carbohydrate degradation; glycolysis; D-glyceraldehyde 3-phosphate and glycerone phosphate from D-glucose: step 3/4. Allosterically activated by ADP and other diphosphonucleosides, and allosterically inhibited by phosphoenolpyruvate. Functionally, catalyzes the phosphorylation of D-fructose 6-phosphate to fructose 1,6-bisphosphate by ATP, the first committing step of glycolysis. The chain is ATP-dependent 6-phosphofructokinase from Natranaerobius thermophilus (strain ATCC BAA-1301 / DSM 18059 / JW/NM-WN-LF).